Here is a 229-residue protein sequence, read N- to C-terminus: Flagellar L-ring protein (229 aa).

Positions 1 to 23 (MLSRLGARVLYCLAGLALLASGG) are cleaved as a signal peptide. A lipid anchor (N-palmitoyl cysteine) is attached at C24. Residue C24 is the site of S-diacylglycerol cysteine attachment.

It belongs to the FlgH family. In terms of assembly, the basal body constitutes a major portion of the flagellar organelle and consists of four rings (L,P,S, and M) mounted on a central rod.

Its subcellular location is the cell outer membrane. The protein localises to the bacterial flagellum basal body. Assembles around the rod to form the L-ring and probably protects the motor/basal body from shearing forces during rotation. The chain is Flagellar L-ring protein from Cupriavidus pinatubonensis (strain JMP 134 / LMG 1197) (Cupriavidus necator (strain JMP 134)).